Here is a 100-residue protein sequence, read N- to C-terminus: Small ribosomal subunit protein bS6 (100 aa).

It belongs to the bacterial ribosomal protein bS6 family.

Binds together with bS18 to 16S ribosomal RNA. The polypeptide is Small ribosomal subunit protein bS6 (Enterococcus faecalis (strain ATCC 700802 / V583)).